Reading from the N-terminus, the 246-residue chain is MTNNTQRPSGRQADQLRDVRITRHYTKHAEGSVLVEFGDTKVICTASIAESVPSFLRDRGQGWLTAEYGMLPRATHTRSDREAARGKQTGRTQEIQRLIGRALRSVFDLEKLGARTLHIDCDVIQADGGTRTASITGAFVAAHDAVARLLATGRIESSPITDYVAAISVGVYDGLPVLDLDYDEDSQCDTDMNVVMTGAGGFVEIQGTAEGVPFSRDEMNALLDLASDGINTLIAKQKAALEQKGE.

Residues Arg-91 and 129–131 (GTR) contribute to the phosphate site.

It belongs to the RNase PH family. As to quaternary structure, homohexameric ring arranged as a trimer of dimers.

The catalysed reaction is tRNA(n+1) + phosphate = tRNA(n) + a ribonucleoside 5'-diphosphate. Functionally, phosphorolytic 3'-5' exoribonuclease that plays an important role in tRNA 3'-end maturation. Removes nucleotide residues following the 3'-CCA terminus of tRNAs; can also add nucleotides to the ends of RNA molecules by using nucleoside diphosphates as substrates, but this may not be physiologically important. Probably plays a role in initiation of 16S rRNA degradation (leading to ribosome degradation) during starvation. This chain is Ribonuclease PH, found in Paraburkholderia xenovorans (strain LB400).